A 481-amino-acid chain; its full sequence is Inosine-5'-monophosphate dehydrogenase (481 aa).

CBS domains are found at residues 92–148 (VIND…SKKV) and 152–209 (MTKM…PEAN). NAD(+)-binding positions include aspartate 244 and 293–295 (GIG). Glycine 295 and glycine 297 together coordinate K(+). Serine 298 lines the IMP pocket. Cysteine 300 lines the K(+) pocket. Catalysis depends on cysteine 300, which acts as the Thioimidate intermediate. IMP contacts are provided by residues 333 to 335 (DGG), 356 to 357 (GS), and 380 to 384 (YRGMG). Arginine 396 serves as the catalytic Proton acceptor. Glutamate 410 lines the IMP pocket. K(+)-binding residues include glutamate 464, serine 465, and histidine 466.

This sequence belongs to the IMPDH/GMPR family. Homotetramer. The cofactor is K(+).

It catalyses the reaction IMP + NAD(+) + H2O = XMP + NADH + H(+). Its pathway is purine metabolism; XMP biosynthesis via de novo pathway; XMP from IMP: step 1/1. With respect to regulation, mycophenolic acid (MPA) is a non-competitive inhibitor that prevents formation of the closed enzyme conformation by binding to the same site as the amobile flap. In contrast, mizoribine monophosphate (MZP) is a competitive inhibitor that induces the closed conformation. MPA is a potent inhibitor of mammalian IMPDHs but a poor inhibitor of the bacterial enzymes. MZP is a more potent inhibitor of bacterial IMPDH. Catalyzes the conversion of inosine 5'-phosphate (IMP) to xanthosine 5'-phosphate (XMP), the first committed and rate-limiting step in the de novo synthesis of guanine nucleotides, and therefore plays an important role in the regulation of cell growth. The chain is Inosine-5'-monophosphate dehydrogenase from Helicobacter pylori (strain J99 / ATCC 700824) (Campylobacter pylori J99).